We begin with the raw amino-acid sequence, 250 residues long: MADS-box transcription factor 47 (250 aa).

A compositionally biased stretch (gly residues) spans 1 to 10 (MAGGGGGGGR). 2 disordered regions span residues 1–20 (MAGG…AATG) and 196–250 (SRME…FSSK). Residues 11 to 20 (GEGEGRAATG) are compositionally biased toward basic and acidic residues. Residues 20–80 (GKRERIAIRR…GKLFQFASTS (61 aa)) enclose the MADS-box domain. Residues 106–198 (QGEDSSTCAR…QLQVSRMSRM (93 aa)) form the K-box domain. The span at 214–224 (GQSSESVTNAS) shows a compositional bias: polar residues.

May interact with MADS18. In terms of tissue distribution, expressed in roots, shoots and developing panicles. Expressed in mature stems and leaves, flowering panicles, developing seeds, and mature seeds.

The protein localises to the nucleus. In terms of biological role, transcription factor that modulates expressions of multiple genes involved in cell signaling and gene transcription. Plays a negative regulatory role in brassinosteroid signaling. The sequence is that of MADS-box transcription factor 47 from Oryza sativa subsp. japonica (Rice).